We begin with the raw amino-acid sequence, 355 residues long: UPF0421 protein BCE_2776 (355 aa).

4 helical membrane-spanning segments follow: residues 19–39 (IAVF…IFAV), 74–94 (FTFF…FTIV), 109–129 (TLTA…AFLI), and 131–151 (LATT…ILPP).

The protein belongs to the UPF0421 family.

It localises to the cell membrane. The sequence is that of UPF0421 protein BCE_2776 from Bacillus cereus (strain ATCC 10987 / NRS 248).